A 1158-amino-acid chain; its full sequence is Teashirt homolog 1 (1158 aa).

Disordered stretches follow at residues Asp70 to Thr126, Ile170 to Gly228, and Thr310 to Gly341. Residues Leu76–Asn88 show a composition bias toward polar residues. Composition is skewed to low complexity over residues Ser186–Ser205 and Ser213–Gly228. 2 C2H2-type zinc fingers span residues Phe288–His312 and Leu349–His373. Residues Thr310 to Lys326 show a composition bias toward basic and acidic residues. A disordered region spans residues Pro405–Thr425. The C2H2-type 3 zinc-finger motif lies at Leu461–His485. Disordered regions lie at residues Pro516–Ser573, Leu656–Ser681, and Val693–Asp748. A compositionally biased stretch (basic and acidic residues) spans Glu555–Ser573. Over residues Leu656–Ser671 the composition is skewed to low complexity. Composition is skewed to basic and acidic residues over residues Val693–Thr716 and Leu724–Asp748. The homeobox DNA-binding region spans Arg963–Gly1033. C2H2-type zinc fingers lie at residues Phe1048 to His1070 and Phe1115 to His1138.

Belongs to the teashirt C2H2-type zinc-finger protein family.

Its subcellular location is the nucleus. In terms of biological role, probable transcriptional regulator involved in developmental processes. May act as a transcriptional repressor (Potential). The sequence is that of Teashirt homolog 1 (tshz1) from Danio rerio (Zebrafish).